The primary structure comprises 400 residues: MSRNITIEMLNQIPVQDQQIELVERKCLGHPDSIADGIAEAVSRALCNTYIDQFGGVLHHNTDQGEIVAGESMPKFGGGKIIKPIFVLLDGRATKEFNGEKIAADTVALKAAKDYLRTILPELNLDQHLIMDCRLGTGSTDLRDVFKPEAGQIPRANDTSFGVSYAPFSDIEKCIREISSYIDTTLRPKYPVYGTDIKIMGLRQGNTIKLTICCAMVDRYVSSLSDYVNYREKLAEEALKVAKTCTDKKVEVSVNTADCDIECSLFLTVTGTSAEMGDDGSVGRGNRANGLITPHRPMSMEATSGKNPINHIGKIYNLLSNELAHTCVEKVDGIAEIQVRLLSQIGSPIDQPLVASAQIIPKPSFTVKDIERDVYEIIDSGLENITSVTERVIRGELKTF.

An ATP-binding site is contributed by 136 to 141 (GTGSTD).

This sequence belongs to the AdoMet synthase 2 family. The cofactor is Mg(2+).

It carries out the reaction L-methionine + ATP + H2O = S-adenosyl-L-methionine + phosphate + diphosphate. The protein operates within amino-acid biosynthesis; S-adenosyl-L-methionine biosynthesis; S-adenosyl-L-methionine from L-methionine: step 1/1. Its function is as follows. Catalyzes the formation of S-adenosylmethionine from methionine and ATP. This Methanospirillum hungatei JF-1 (strain ATCC 27890 / DSM 864 / NBRC 100397 / JF-1) protein is S-adenosylmethionine synthase.